A 71-amino-acid polypeptide reads, in one-letter code: Protein MMP24OS (71 aa).

Positions 1–10 are enriched in gly residues; it reads MGAQLSGGRG. Residues 1–61 form a disordered region; it reads MGAQLSGGRG…PSPWGPLDDV (61 aa). Residues 36-55 show a composition bias toward pro residues; the sequence is HPPQPQPQPQPQPQPEPSPW.

The protein is Protein MMP24OS of Homo sapiens (Human).